The chain runs to 226 residues: Large ribosomal subunit protein uL3 (226 aa).

The residue at position 160 (Gln-160) is an N5-methylglutamine.

Belongs to the universal ribosomal protein uL3 family. In terms of assembly, part of the 50S ribosomal subunit. Forms a cluster with proteins L14 and L19. Methylated by PrmB.

Its function is as follows. One of the primary rRNA binding proteins, it binds directly near the 3'-end of the 23S rRNA, where it nucleates assembly of the 50S subunit. The polypeptide is Large ribosomal subunit protein uL3 (Leptothrix cholodnii (strain ATCC 51168 / LMG 8142 / SP-6) (Leptothrix discophora (strain SP-6))).